We begin with the raw amino-acid sequence, 227 residues long: Exodeoxyribonuclease (227 aa).

The enzyme catalyses Exonucleolytic cleavage in the 3'- to 5'-direction to yield nucleoside 5'-phosphates.. 3'-5' exonuclease that preferentially uses ssDNA as substrate. Plays a role in group I intron homing. May play a role in the final step of host DNA degradation, by scavenging DNA into mononucleotides. The sequence is that of Exodeoxyribonuclease (dexA) from Escherichia coli (Bacteriophage T4).